The primary structure comprises 337 residues: P2Y purinoceptor 14 (337 aa).

Residues 1-28 (MNATSVPPAEGSCPSNALITKQIIPMLY) lie on the Extracellular side of the membrane. Residue N2 is glycosylated (N-linked (GlcNAc...) asparagine). The helical transmembrane segment at 29-49 (FVVFVAGILLNGMSGWVFFYV) threads the bilayer. The Cytoplasmic segment spans residues 50-54 (PSSKS). The helical transmembrane segment at 55–75 (FIVYLKNIVIADFLMSLTFPF) threads the bilayer. The Extracellular portion of the chain corresponds to 76 to 95 (KILGDLGLGLWQVKVFVCRV). C93 and C171 are oxidised to a cystine. Residues 96 to 116 (SAVLFYINMYVSIVFFGLIGF) form a helical membrane-spanning segment. Residues 117 to 138 (DRYYKIVKPLLTSFIQSISYSK) lie on the Cytoplasmic side of the membrane. The chain crosses the membrane as a helical span at residues 139 to 159 (LLSVLVWSLTLLIALPNMILT). Over 160-187 (NRNVTEATRVKCMDLKSDLGLKWHKASS) the chain is Extracellular. A glycan (N-linked (GlcNAc...) asparagine) is linked at N162. The chain crosses the membrane as a helical span at residues 188–208 (YIFVGIFWIVFLSLIIFYTAI). Residues 209-233 (TKKIFKSHFKSRKNSVSVKKKSSRN) are Cytoplasmic-facing. A helical membrane pass occupies residues 234–254 (IFSIMFVFFICFVPYHIARIP). The Extracellular segment spans residues 255–277 (YTQSQTEAHYSCQSKQILFYVKE). The helical transmembrane segment at 278 to 298 (FSLLLSAANVCLDPIIYFFLC) threads the bilayer. At 299-337 (QPFREVLCKKLHIQLKTQHDSETSKIKRENIIQESTDTL) the chain is on the cytoplasmic side.

It belongs to the G-protein coupled receptor 1 family.

It is found in the cell membrane. Functionally, receptor for UDP-glucose and other UDP-sugar coupled to G-proteins. Not activated by ATP, ADP, UTP or ATP. This is P2Y purinoceptor 14 (P2RY14) from Bos taurus (Bovine).